Here is a 221-residue protein sequence, read N- to C-terminus: Transcription factor bHLH148 (221 aa).

2 disordered regions span residues 1–45 and 70–89; these read MASL…GEIH and LNSS…GKAV. Composition is skewed to low complexity over residues 26-41 and 72-82; these read SASS…SSVS and SSASTSSSPTA. In terms of domain architecture, bHLH spans 148–197; that stretch reads KRRVSVLRLNKKSIPDVNRKVRVLGRLVPGCGKQSVPVILEEATDYIQAL.

In terms of assembly, homodimer. Interacts with PRE3. Binds to RSA1.

It localises to the nucleus. BHLH transcription factor that binds DNA on specific sequence 5'-CANNTG-3' in target gene promoters. Negatively regulates brassinosteroid signaling. Together with BHLH148/RITF1, regulates the transcription of several genes involved in the detoxification of reactive oxygen species (ROS) generated by salt (NaCl) stress. Confers tolerance to salt and to the oxidative stress-inducing reagents hydrogen peroxide H(2)O(2) and methyl viologen (MV). This Arabidopsis thaliana (Mouse-ear cress) protein is Transcription factor bHLH148.